We begin with the raw amino-acid sequence, 98 residues long: NADH-ubiquinone oxidoreductase chain 4L (98 aa).

3 consecutive transmembrane segments (helical) span residues 1–21 (MSMV…GLLM), 29–49 (SLLC…VTIL), and 61–81 (IILL…LVMV).

This sequence belongs to the complex I subunit 4L family. Core subunit of respiratory chain NADH dehydrogenase (Complex I) which is composed of 45 different subunits.

Its subcellular location is the mitochondrion inner membrane. The enzyme catalyses a ubiquinone + NADH + 5 H(+)(in) = a ubiquinol + NAD(+) + 4 H(+)(out). Its function is as follows. Core subunit of the mitochondrial membrane respiratory chain NADH dehydrogenase (Complex I) which catalyzes electron transfer from NADH through the respiratory chain, using ubiquinone as an electron acceptor. Part of the enzyme membrane arm which is embedded in the lipid bilayer and involved in proton translocation. The sequence is that of NADH-ubiquinone oxidoreductase chain 4L (MT-ND4L) from Pusa hispida (Ringed seal).